We begin with the raw amino-acid sequence, 83 residues long: U5-theraphotoxin-Hs1c (83 aa).

A signal peptide spans 1–21 (MKTSMFLTLTGLVLLFVVCYA). Residues 22–49 (SESEEKEFPKELLSSIFAADSDFKVEER) constitute a propeptide that is removed on maturation. Disulfide bonds link Cys51/Cys63, Cys56/Cys68, and Cys62/Cys75.

It belongs to the neurotoxin 10 (Hwtx-1) family. 51 (Hntx-8) subfamily. Hntx-8 sub-subfamily. In terms of tissue distribution, expressed by the venom gland.

It is found in the secreted. Agglutinates erythrocytes. The protein is U5-theraphotoxin-Hs1c of Cyriopagopus schmidti (Chinese bird spider).